Consider the following 191-residue polypeptide: MKKQLFSALIGASLLAPMAASAADYVIDREGAHASITFKVSHLGYSYVVGRFNDFSGDFSYDAAKPTAAKVNVTVNTLSVDSNHAERDKHIRSADFLNTSKFAQATFTSTTVEDKGNGDLVINGNLTLNGVTKPLAINAHAVGEGQDPWGGYRAGFTGTTTFAMKDFGIKMDLGPASSHVELDLVVEGVRK.

The N-terminal stretch at 1–22 (MKKQLFSALIGASLLAPMAASA) is a signal peptide.

It belongs to the UPF0312 family. Type 1 subfamily.

It localises to the periplasm. The sequence is that of UPF0312 protein Sbal195_3198 from Shewanella baltica (strain OS195).